The chain runs to 149 residues: Large ribosomal subunit protein bL9 (149 aa).

The protein belongs to the bacterial ribosomal protein bL9 family.

Functionally, binds to the 23S rRNA. In Persephonella marina (strain DSM 14350 / EX-H1), this protein is Large ribosomal subunit protein bL9.